We begin with the raw amino-acid sequence, 1325 residues long: Clustered mitochondria protein homolog (1325 aa).

The region spanning 311-573 (PKHESDPMRT…RHTPMDVTWL (263 aa)) is the Clu domain. Disordered regions lie at residues 893–937 (KHAE…PLRT), 1032–1063 (DSNQ…DDQL), and 1245–1325 (QHAR…AKRS). Residues 1265–1275 (SAHHHHHRHLH) show a composition bias toward basic residues. Over residues 1276 to 1285 (QQQQNSSSSP) the composition is skewed to low complexity. Residues 1314 to 1325 (AARKRAARAKRS) show a composition bias toward basic residues.

Belongs to the CLU family. In terms of assembly, may associate with the eukaryotic translation initiation factor 3 (eIF-3) complex.

The protein resides in the cytoplasm. Its function is as follows. mRNA-binding protein involved in proper cytoplasmic distribution of mitochondria. In Malassezia globosa (strain ATCC MYA-4612 / CBS 7966) (Dandruff-associated fungus), this protein is Clustered mitochondria protein homolog.